The primary structure comprises 227 residues: H-N-H endonuclease F-TflIV (227 aa).

Functionally, endonuclease that introduces double-strand break into pseudo palindromic 17 bp DNA sequence yielding 1 bp extensions with 3'-overhangs. This is H-N-H endonuclease F-TflIV from Escherichia phage T5 (Enterobacteria phage T5).